Consider the following 147-residue polypeptide: uncharacterized protein (147 aa).

Over residues 72 to 81 the composition is skewed to low complexity; sequence ARAKPASRAP. Positions 72-147 are disordered; the sequence is ARAKPASRAP…QGAAGRRLSP (76 aa).

This is an uncharacterized protein from Homo sapiens (Human).